The chain runs to 176 residues: ATP-dependent protease subunit HslV (176 aa).

T5 is an active-site residue. 3 residues coordinate Na(+): G161, C164, and T167.

It belongs to the peptidase T1B family. HslV subfamily. A double ring-shaped homohexamer of HslV is capped on each side by a ring-shaped HslU homohexamer. The assembly of the HslU/HslV complex is dependent on binding of ATP.

The protein localises to the cytoplasm. The enzyme catalyses ATP-dependent cleavage of peptide bonds with broad specificity.. With respect to regulation, allosterically activated by HslU binding. Protease subunit of a proteasome-like degradation complex believed to be a general protein degrading machinery. The protein is ATP-dependent protease subunit HslV of Wolinella succinogenes (strain ATCC 29543 / DSM 1740 / CCUG 13145 / JCM 31913 / LMG 7466 / NCTC 11488 / FDC 602W) (Vibrio succinogenes).